A 209-amino-acid chain; its full sequence is DNA ADP-ribosyl transferase (209 aa).

Residues 9–209 (TPIYHITHID…RVCIRKDWYY (201 aa)) form the DarT domain. Residues 13–15 (HIT), Gly-22, and Leu-30 contribute to the NAD(+) site. Positions 35–53 (SPPKQRSIAYAHIQERRNR) are NAD(+)-binding element. A DNA-binding region spans residues 44 to 50 (YAHIQER). Position 51 (Arg-51) interacts with NAD(+). The Proton acceptor role is filled by Arg-51. DNA-binding regions lie at residues 75–80 (RSPMLY), 145–148 (SYWA), and 154–158 (REKKQ). Positions 116–160 (TDRHGVLSHARFFRQLEELAQLDWEAIQASYWADPPELREKKQAE) are ADP-ribosylating turn-turn loop. The active site involves Glu-160.

The protein belongs to the DarT ADP-ribosyltransferase family. Interacts with cognate antitoxin DarG (via C-terminus); this heterodimeric complex neutralizes the toxic effect of DarT by preventing ssDNA binding to DarT and consequently inactivating the toxin by direct protein-protein interactions.

The enzyme catalyses a thymidine in DNA + NAD(+) = an N-(ADP-alpha-D-ribosyl)-thymidine in DNA + nicotinamide + H(+). In terms of biological role, toxic component of the hybrid type II/IV toxin-antitoxin (TA) system DarTG, which plays a crucial role in controlling bacterial growth and bacteriophage infection. In case of phage infection, DarT toxin ADP-ribosylates DNA, which inhibits both viral DNA and RNA synthesis and leads to abortive infection. ADP-ribosylates ssDNA on the second thymidine of the consensus sequence 5'-TNTC-3'; the protein does not auto-modify. Arg-51 is highly flexible, allowing it to assume multiple positions in the crystal structures. Its toxic effect is neutralized by cognate antitoxin DarG. The polypeptide is DNA ADP-ribosyl transferase (Thermus sp. (strain 2.9)).